Consider the following 47-residue polypeptide: Lysis protein for colicin E8 (47 aa).

The signal sequence occupies residues 1 to 19; it reads MKKITGIILLLLAVIILAA. The N-palmitoyl cysteine moiety is linked to residue Cys20. Residue Cys20 is the site of S-diacylglycerol cysteine attachment.

It is found in the cell outer membrane. Its function is as follows. Lysis proteins are required for both colicin release and partial cell lysis. In Escherichia coli, this protein is Lysis protein for colicin E8 (lys).